A 220-amino-acid chain; its full sequence is Botcinic acid biosynthesis cluster B protein 12 (220 aa).

The protein operates within polyketide biosynthesis. Its function is as follows. Part of the gene cluster B that mediates the biosynthesis of botcinic acid and its botcinin derivatives, acetate-derived polyketides that contribute to virulence when combined with the sesquiterpene botrydial. Botcinic acid and its derivatives have been shown to induce chlorosis and necrosis during host plant infection, but also have antifungal activities. Two polyketide synthases, BOA6 and BOA9, are involved in the biosynthesis of botcinins. BOA6 mediates the formation of the per-methylated tetraketide core by condensation of four units of malonyl-CoA with one unit of acetyl-CoA, which would be methylated in activated methylene groups to yield a bicyclic acid intermediate that could then either be converted to botrylactone derivatives or lose the starter acetate unit through a retro-Claisen type C-C bond cleavage to yield botcinin derivatives. The second polyketide synthase, BOA9, is probably required for the biosynthesis of the tetraketide side chain of botcinins. The methyltransferase (MT) domain within BOA6 is probably responsible for the incorporation of four methyl groups. The trans-enoyl reductase BOA5 might take over the enoyl reductase function of BOA6 that misses an ER domain. The monooxygenases BOA2, BOA3 and BOA4 might be involved in further hydroxylations at C4, C5 and C8, whereas BOA7, close to BOA9, could potentially be involved in the hydroxylation at C4 in the side chain of botcinins. The polypeptide is Botcinic acid biosynthesis cluster B protein 12 (Botryotinia fuckeliana (strain B05.10) (Noble rot fungus)).